A 383-amino-acid chain; its full sequence is Putative F-box protein At3g22650 (383 aa).

Residues 3 to 50 (SCERSLLPIDIIEEICCRIPVEYLTQFKLTCKQWFALLKDKRFIYKYL) enclose the F-box domain.

The sequence is that of Putative F-box protein At3g22650 from Arabidopsis thaliana (Mouse-ear cress).